Reading from the N-terminus, the 166-residue chain is Urease accessory protein UreE (166 aa).

The interval 132–156 (FQPEHGAYGGGHHHSRHGDEDFNYP) is disordered.

It belongs to the UreE family.

It is found in the cytoplasm. Its function is as follows. Involved in urease metallocenter assembly. Binds nickel. Probably functions as a nickel donor during metallocenter assembly. This chain is Urease accessory protein UreE, found in Pseudomonas fluorescens (strain ATCC BAA-477 / NRRL B-23932 / Pf-5).